Reading from the N-terminus, the 1087-residue chain is Band 4.1-like protein 3 (1087 aa).

The residue at position 1 (Met-1) is an N-acetylmethionine. Residues 1–43 are disordered; that stretch reads MTTESGSDSESKPDQEAEPQEAAGAQGRAGAPVPEPPKEEQQQ. At Thr-2 the chain carries N-acetylthreonine; in Band 4.1-like protein 3, N-terminally processed. Residues 20 to 32 show a composition bias toward low complexity; it reads QEAAGAQGRAGAP. Ser-88 carries the phosphoserine modification. One can recognise an FERM domain in the interval 110-391; sequence MQCKVILLDG…EHHTFFRLLL (282 aa). The segment at 394 to 513 is hydrophilic; the sequence is APPKKFLTLG…PGLGTDSCPL (120 aa). Residues Ser-420, Ser-443, and Ser-460 each carry the phosphoserine modification. Over residues 459–469 the composition is skewed to polar residues; that stretch reads ISQTNLITTVT. Disordered regions lie at residues 459–529, 541–563, 675–715, and 937–965; these read ISQT…TELR, GYEP…GPGR, SASL…EDAE, and SETL…SPGG. 2 positions are modified to phosphothreonine: Thr-469 and Thr-492. The tract at residues 514-860 is spectrin--actin-binding; the sequence is SPPSTHCAPT…VVQETVLVEE (347 aa). Positions 516–526 are enriched in polar residues; that stretch reads PSTHCAPTSPT. The segment covering 681–691 has biased composition (acidic residues); the sequence is DPSDSSEEETD. Residues 698–707 show a composition bias toward low complexity; that stretch reads AADGETTATE. At Thr-706 the chain carries Phosphothreonine. 3 positions are modified to phosphoserine: Ser-708, Ser-960, and Ser-962. Residues 861 to 1083 form a C-terminal (CTD) region; it reads RRVVHASGDA…VHKETEITPE (223 aa). Residues 947–960 show a composition bias toward polar residues; that stretch reads ESSTVKTETISFGS. Thr-1081 bears the Phosphothreonine mark.

As to quaternary structure, interacts (via FERM domain) with CADM1. Interacts (via FERM domain) with PRMT3; the interaction is direct and inhibits the protein-arginine N-methyltransferase activity of PRMT3. Interacts with PRMT5. Interacts with PRMT6. Expressed at high levels in brain, with lower levels in kidney, intestine, and testis. Detected in lung.

Its subcellular location is the cytoplasm. It is found in the cytoskeleton. The protein resides in the cell junction. It localises to the cell membrane. Functionally, tumor suppressor that inhibits cell proliferation and promotes apoptosis. Modulates the activity of protein arginine N-methyltransferases, including PRMT3 and PRMT5. The sequence is that of Band 4.1-like protein 3 from Homo sapiens (Human).